Reading from the N-terminus, the 171-residue chain is Adenine phosphoribosyltransferase (171 aa).

Belongs to the purine/pyrimidine phosphoribosyltransferase family. Homodimer.

The protein resides in the cytoplasm. It catalyses the reaction AMP + diphosphate = 5-phospho-alpha-D-ribose 1-diphosphate + adenine. The protein operates within purine metabolism; AMP biosynthesis via salvage pathway; AMP from adenine: step 1/1. In terms of biological role, catalyzes a salvage reaction resulting in the formation of AMP, that is energically less costly than de novo synthesis. This is Adenine phosphoribosyltransferase from Christiangramia forsetii (strain DSM 17595 / CGMCC 1.15422 / KT0803) (Gramella forsetii).